We begin with the raw amino-acid sequence, 199 residues long: Probable chemoreceptor glutamine deamidase CheD (199 aa).

Belongs to the CheD family.

It catalyses the reaction L-glutaminyl-[protein] + H2O = L-glutamyl-[protein] + NH4(+). Functionally, probably deamidates glutamine residues to glutamate on methyl-accepting chemotaxis receptors (MCPs), playing an important role in chemotaxis. This chain is Probable chemoreceptor glutamine deamidase CheD, found in Cereibacter sphaeroides (strain ATCC 17025 / ATH 2.4.3) (Rhodobacter sphaeroides).